We begin with the raw amino-acid sequence, 406 residues long: Immediate early response gene 5-like protein (406 aa).

Disordered regions lie at residues 166-195 (QPPHGAPHRGQHLEPLQPGPAPLPPPAPAA) and 216-235 (AAPSTVAASSPPASTAPSSS). Residues 182 to 193 (QPGPAPLPPPAP) show a composition bias toward pro residues.

Belongs to the IER family.

The sequence is that of Immediate early response gene 5-like protein (Ier5l) from Mus musculus (Mouse).